A 225-amino-acid polypeptide reads, in one-letter code: Rho GDP-dissociation inhibitor 3 (225 aa).

Belongs to the Rho GDI family. Primarily expressed in pancreas and brain.

It localises to the cytoplasm. In terms of biological role, inhibits GDP/GTP exchange reaction of RhoB. Interacts specifically with the GDP- and GTP-bound forms of post-translationally processed Rhob and Rhog proteins, both of which show a growth-regulated expression in mammalian cells. Stimulates the release of the GDP-bound but not the GTP-bound RhoB protein. Also inhibits the GDP/GTP exchange of RhoB but shows less ability to inhibit the dissociation of prebound GTP. In Homo sapiens (Human), this protein is Rho GDP-dissociation inhibitor 3 (ARHGDIG).